We begin with the raw amino-acid sequence, 289 residues long: Pantothenate synthetase (289 aa).

ATP is bound at residue 30 to 37; the sequence is MGYLHKGH. Histidine 37 acts as the Proton donor in catalysis. A (R)-pantoate-binding site is contributed by glutamine 61. Beta-alanine is bound at residue glutamine 61. 147–150 lines the ATP pocket; the sequence is GEKD. Residue glutamine 153 coordinates (R)-pantoate. ATP-binding positions include valine 176 and 184 to 187; that span reads CSSR.

Belongs to the pantothenate synthetase family. Homodimer.

The protein localises to the cytoplasm. The catalysed reaction is (R)-pantoate + beta-alanine + ATP = (R)-pantothenate + AMP + diphosphate + H(+). It participates in cofactor biosynthesis; (R)-pantothenate biosynthesis; (R)-pantothenate from (R)-pantoate and beta-alanine: step 1/1. In terms of biological role, catalyzes the condensation of pantoate with beta-alanine in an ATP-dependent reaction via a pantoyl-adenylate intermediate. The protein is Pantothenate synthetase of Allorhizobium ampelinum (strain ATCC BAA-846 / DSM 112012 / S4) (Agrobacterium vitis (strain S4)).